Here is a 111-residue protein sequence, read N- to C-terminus: Large ribosomal subunit protein uL23 (111 aa).

It belongs to the universal ribosomal protein uL23 family. In terms of assembly, part of the 50S ribosomal subunit. Contacts protein L29, and trigger factor when it is bound to the ribosome.

One of the early assembly proteins it binds 23S rRNA. One of the proteins that surrounds the polypeptide exit tunnel on the outside of the ribosome. Forms the main docking site for trigger factor binding to the ribosome. This is Large ribosomal subunit protein uL23 from Nitrosomonas europaea (strain ATCC 19718 / CIP 103999 / KCTC 2705 / NBRC 14298).